We begin with the raw amino-acid sequence, 331 residues long: LIM/homeobox protein Lhx9 (331 aa).

2 LIM zinc-binding domains span residues 71–132 and 133–194; these read TLCA…FSVK and RCAR…LVQG. Positions 253-275 are disordered; sequence ETDLDRDQTYPPSQKTKRMRTSF. Residues 268–327 constitute a DNA-binding region (homeobox); it reads TKRMRTSFKHHQLRTMKSYFAINHNPDAKDLKQLAQKTGLTKRVLQGEQCSGFNSHTTRR.

The protein resides in the nucleus. Functionally, may be involved in gonadal development. The polypeptide is LIM/homeobox protein Lhx9 (lhx9) (Xenopus laevis (African clawed frog)).